A 120-amino-acid chain; its full sequence is Jacalin-related lectin 39 (120 aa).

Residues 6 to 120 enclose the Jacalin-type lectin domain; sequence SRDHADFVAH…KRTFDFGGFN (115 aa).

It belongs to the jacalin lectin family.

The chain is Jacalin-related lectin 39 (JAL39) from Arabidopsis thaliana (Mouse-ear cress).